Reading from the N-terminus, the 610-residue chain is UvrABC system protein C (610 aa).

Positions serine 16–valine 94 constitute a GIY-YIG domain. Residues aspartate 204 to valine 239 enclose the UVR domain. Positions histidine 540–glutamate 559 are disordered. A compositionally biased stretch (basic residues) spans serine 543 to valine 552.

Belongs to the UvrC family. Interacts with UvrB in an incision complex.

It is found in the cytoplasm. The UvrABC repair system catalyzes the recognition and processing of DNA lesions. UvrC both incises the 5' and 3' sides of the lesion. The N-terminal half is responsible for the 3' incision and the C-terminal half is responsible for the 5' incision. This chain is UvrABC system protein C, found in Klebsiella pneumoniae (strain 342).